The following is a 165-amino-acid chain: Serine/threonine-protein phosphatase 2A 56 kDa regulatory subunit epsilon isoform (165 aa).

The interval Met-1 to Lys-41 is disordered. At Ser-2 the chain carries N-acetylserine. Phosphothreonine is present on Thr-7. Residues Lys-20 to Arg-29 are compositionally biased toward basic residues. Phosphoserine occurs at positions 30, 32, and 34. The segment covering Ser-30–Lys-41 has biased composition (low complexity).

Belongs to the phosphatase 2A regulatory subunit B56 family. As to quaternary structure, PP2A consists of a common heterodimeric core enzyme, composed of a 36 kDa catalytic subunit (subunit C) and a 65 kDa constant regulatory subunit (PR65 or subunit A), that associates with a variety of regulatory subunits. Proteins that associate with the core dimer include three families of regulatory subunits B (the R2/B/PR55/B55, R3/B''/PR72/PR130/PR59 and R5/B'/B56 families), the 48 kDa variable regulatory subunit, viral proteins, and cell signaling molecules. Interacts with SGO1. Found in a complex with at least ARL2, PPP2CB; PPP2R1A, PPP2R2A, PPP2R5E and TBCD. In terms of tissue distribution, highly expressed in testis, lung and brain.

It localises to the cytoplasm. The B regulatory subunit might modulate substrate selectivity and catalytic activity, and might also direct the localization of the catalytic enzyme to a particular subcellular compartment. In Oryctolagus cuniculus (Rabbit), this protein is Serine/threonine-protein phosphatase 2A 56 kDa regulatory subunit epsilon isoform (PPP2R5E).